The sequence spans 651 residues: DNA mismatch repair protein MutL (651 aa).

The disordered stretch occupies residues 336–398; the sequence is RLDMTEPETG…ANSGYQPENP (63 aa). A compositionally biased stretch (polar residues) spans 385 to 394; the sequence is ARESANSGYQ.

It belongs to the DNA mismatch repair MutL/HexB family.

Functionally, this protein is involved in the repair of mismatches in DNA. It is required for dam-dependent methyl-directed DNA mismatch repair. May act as a 'molecular matchmaker', a protein that promotes the formation of a stable complex between two or more DNA-binding proteins in an ATP-dependent manner without itself being part of a final effector complex. This chain is DNA mismatch repair protein MutL, found in Pectobacterium atrosepticum (strain SCRI 1043 / ATCC BAA-672) (Erwinia carotovora subsp. atroseptica).